The primary structure comprises 462 residues: 3beta-hydroxysteroid dehydrogenase/Delta(5)-Delta(4) isomerase 1 (462 aa).

NAD(+) contacts are provided by residues 51-56 (GGAGHL), Tyr220, and Lys224. The active-site Proton donor is the Lys224. 2 consecutive transmembrane segments (helical) span residues 321 to 341 (VGTFSFWTPLNIALGFSSSMI) and 428 to 448 (VAVLVLGTILIFVAVFSFTFW).

This sequence belongs to the 3-beta-HSD family. Expressed exclusively in the neuron-like XXX(L/R) cells through all four larval stages and becomes fainter in adults.

It is found in the membrane. The enzyme catalyses a 3beta-hydroxy-Delta(5)-steroid + NAD(+) = a 3-oxo-Delta(5)-steroid + NADH + H(+). The catalysed reaction is cholesterol + NAD(+) = cholest-5-en-3-one + NADH + H(+). It carries out the reaction a 3-oxo-Delta(5)-steroid = a 3-oxo-Delta(4)-steroid. It catalyses the reaction cholest-5-en-3-one = cholest-4-en-3-one. It functions in the pathway steroid hormone biosynthesis; dafachronic acid biosynthesis. Hydroxysteroid dehydrogenase involved in the biosynthesis of dafrachonic acids. Catalyzes the dehydrogenation of cholesterol or its derivatives and the isomerization of the double carbon bond on the sterol ring. Modifies sterols into a Delta(4)-3-keto-sterols such as cholest-4-en-3-one, precursor of Delta(4)-dafachronic acid. Contributes to the production of Delta(7)-dafachronic acid in the XXX cells. Dafachronic acids act as ligands and bind directly to the nuclear hormone receptor (NHR) daf-12 suppressing dauer formation and inducing reproductive growth. Acts in parallel to AKT-1 to promote reproductive development via DAF-16/FoxO and DAF-12. The polypeptide is 3beta-hydroxysteroid dehydrogenase/Delta(5)-Delta(4) isomerase 1 (Caenorhabditis elegans).